A 303-amino-acid polypeptide reads, in one-letter code: Glycine--tRNA ligase alpha subunit (303 aa).

Belongs to the class-II aminoacyl-tRNA synthetase family. Tetramer of two alpha and two beta subunits.

The protein localises to the cytoplasm. It catalyses the reaction tRNA(Gly) + glycine + ATP = glycyl-tRNA(Gly) + AMP + diphosphate. This chain is Glycine--tRNA ligase alpha subunit, found in Stenotrophomonas maltophilia (strain K279a).